Reading from the N-terminus, the 102-residue chain is Pole-localizer protein TmaR (102 aa).

Positions 7–34 (IINQARRKNKLKRELQDNQKKIRDNQKR) form a coiled coil.

It belongs to the pole-localizer TmaR family.

The protein localises to the cytoplasm. Its function is as follows. Pole-localizer protein involved in the regulation of several cellular processes. In Aliivibrio salmonicida (strain LFI1238) (Vibrio salmonicida (strain LFI1238)), this protein is Pole-localizer protein TmaR.